The sequence spans 311 residues: Pyrimidine-specific ribonucleoside hydrolase RihA (311 aa).

Histidine 240 is an active-site residue.

This sequence belongs to the IUNH family. RihA subfamily.

Hydrolyzes cytidine or uridine to ribose and cytosine or uracil, respectively. This chain is Pyrimidine-specific ribonucleoside hydrolase RihA, found in Salmonella gallinarum (strain 287/91 / NCTC 13346).